Reading from the N-terminus, the 76-residue chain is uncharacterized protein (76 aa).

The helical transmembrane segment at 40–60 (IVLNLVVLVGVVPLTWMFLGQ) threads the bilayer.

The protein localises to the membrane. This is an uncharacterized protein from Dictyostelium discoideum (Social amoeba).